The chain runs to 178 residues: Riboflavin kinase (178 aa).

Mg(2+) is bound by residues Thr-39 and Asn-41. Glu-116 functions as the Nucleophile in the catalytic mechanism.

Belongs to the flavokinase family. Requires Zn(2+) as cofactor. Mg(2+) is required as a cofactor.

It catalyses the reaction riboflavin + ATP = FMN + ADP + H(+). Its pathway is cofactor biosynthesis; FMN biosynthesis; FMN from riboflavin (ATP route): step 1/1. In terms of biological role, catalyzes the phosphorylation of riboflavin (vitamin B2) to form flavin mononucleotide (FMN) coenzyme. The polypeptide is Riboflavin kinase (FMN1) (Scheffersomyces stipitis (strain ATCC 58785 / CBS 6054 / NBRC 10063 / NRRL Y-11545) (Yeast)).